A 224-amino-acid polypeptide reads, in one-letter code: LexA repressor (224 aa).

The H-T-H motif DNA-binding region spans 38-58 (IREIGDAVGLTSTSSVAHQLR). Basic and acidic residues predominate over residues 71–82 (NRPRAVDVRGID). A disordered region spans residues 71-96 (NRPRAVDVRGIDDAGTPSATTDVIGS). Residues Ser-148 and Lys-185 each act as for autocatalytic cleavage activity in the active site.

Belongs to the peptidase S24 family. Homodimer.

The enzyme catalyses Hydrolysis of Ala-|-Gly bond in repressor LexA.. In terms of biological role, represses a number of genes involved in the response to DNA damage (SOS response), including recA and lexA. In the presence of single-stranded DNA, RecA interacts with LexA causing an autocatalytic cleavage which disrupts the DNA-binding part of LexA, leading to derepression of the SOS regulon and eventually DNA repair. This Mycobacteroides abscessus (strain ATCC 19977 / DSM 44196 / CCUG 20993 / CIP 104536 / JCM 13569 / NCTC 13031 / TMC 1543 / L948) (Mycobacterium abscessus) protein is LexA repressor.